The following is a 290-amino-acid chain: MELRYLRYFVAVAEARNFTRAAHDLGISQPPLSQQIQRLEREIGTPLLRRLTRGVELTEAGESFYVDACQILALSDAALEKTKGIARGMNGSLVPGITSSAAFHSQIFSLLYQFQQRYPAVALRQVEGNMATLMHALGEAELDIAFVRLPCESSKAFNLRIIAEEPMVIALHRSHPLSGESALSLAQLSDAVPVIFPPEVAPGLYEQVYDGCRRAGVDMSRARQSSQISSSISMVDAGFGFALVPQSMTCICLPNVTWHPLQDASLKTEIAIAWRRFERSRTVKRFLEMF.

Positions methionine 1–threonine 58 constitute an HTH lysR-type domain. Residues phenylalanine 18–glutamine 37 constitute a DNA-binding region (H-T-H motif).

Belongs to the LysR transcriptional regulatory family.

Functionally, regulator of the budABC operon for 2,3-butanediol synthesis. The sequence is that of HTH-type transcriptional regulator BudR (budR) from Raoultella terrigena (Klebsiella terrigena).